The sequence spans 873 residues: DNA helicase/primase complex-associated protein (873 aa).

The interval 394–422 is disordered; it reads PPLPRDDGDGENNVVEVSSSTGGAHPPSD.

Belongs to the herpesviridae HEPA family. In terms of assembly, associates with the primase and the helicase to form the helicase-primase complex. Interacts with the origin-binding protein. Interacts with the polymerase catalytic subunit.

It is found in the host nucleus. Component of the helicase/primase complex. Unwinds the DNA at the replication forks and generates single-stranded DNA for both leading and lagging strand synthesis. The primase synthesizes short RNA primers on the lagging strand that the polymerase presumably elongates using dNTPs. The primase-associated factor has no known catalytic activity in the complex and may serve to facilitate the formation of the replisome by directly interacting with the origin-binding protein and the polymerase. The polypeptide is DNA helicase/primase complex-associated protein (UL102) (Human cytomegalovirus (strain Merlin) (HHV-5)).